We begin with the raw amino-acid sequence, 263 residues long: Peptidoglycan-N-acetylmuramic acid deacetylase PdaA (263 aa).

A signal peptide spans 1–23 (MKWMCSICCAAVLLAGGAAQAEA). Residues 66–247 (KTIYLTFDNG…DLKKQGYTFK (182 aa)) enclose the NodB homology domain. Asp73 functions as the Proton acceptor in the catalytic mechanism. The a divalent metal cation site is built by His124 and His128. His222 serves as the catalytic Proton donor.

Belongs to the polysaccharide deacetylase family.

Its function is as follows. Catalyzes the deacetylation of N-acetylmuramic acid (MurNAc) residues in glycan strands of peptidoglycan, leading to the formation of muramic delta-lactam residues in spore cortex, after transpeptidation of deacetylated muramic acid residues. PdaA probably carries out both deacetylation and lactam ring formation and requires the product of CwlD activity on peptidoglycan as a substrate. Is required for germination. Cannot use chitin oligomer (hexa-N-acetylchitohexaose) as a substrate. The protein is Peptidoglycan-N-acetylmuramic acid deacetylase PdaA (pdaA) of Bacillus subtilis (strain 168).